Consider the following 346-residue polypeptide: Extracellular protease (346 aa).

An N-terminal signal peptide occupies residues M1–A21. Position 296 (H296) interacts with Zn(2+). E297 is a catalytic residue. Residues H300 and D309 each contribute to the Zn(2+) site.

Belongs to the peptidase M35 family. The cofactor is Zn(2+).

Its function is as follows. Heat-labile protease. The chain is Extracellular protease from Aeromonas hydrophila.